A 1054-amino-acid polypeptide reads, in one-letter code: DNA-directed RNA polymerase subunit beta' (1054 aa).

Aspartate 383, aspartate 385, and aspartate 387 together coordinate Mg(2+). Zn(2+)-binding residues include cysteine 752, cysteine 826, cysteine 833, and cysteine 836.

This sequence belongs to the RNA polymerase beta' chain family. The RNAP catalytic core consists of 2 alpha, 1 beta, 1 beta' and 1 omega subunit. When a sigma factor is associated with the core the holoenzyme is formed, which can initiate transcription. Mg(2+) serves as cofactor. The cofactor is Zn(2+).

It carries out the reaction RNA(n) + a ribonucleoside 5'-triphosphate = RNA(n+1) + diphosphate. DNA-dependent RNA polymerase catalyzes the transcription of DNA into RNA using the four ribonucleoside triphosphates as substrates. The polypeptide is DNA-directed RNA polymerase subunit beta' (Weissella paramesenteroides (Leuconostoc paramesenteroides)).